We begin with the raw amino-acid sequence, 604 residues long: Proline--tRNA ligase (604 aa).

It belongs to the class-II aminoacyl-tRNA synthetase family. ProS type 1 subfamily. As to quaternary structure, homodimer.

It is found in the cytoplasm. The enzyme catalyses tRNA(Pro) + L-proline + ATP = L-prolyl-tRNA(Pro) + AMP + diphosphate. In terms of biological role, catalyzes the attachment of proline to tRNA(Pro) in a two-step reaction: proline is first activated by ATP to form Pro-AMP and then transferred to the acceptor end of tRNA(Pro). As ProRS can inadvertently accommodate and process non-cognate amino acids such as alanine and cysteine, to avoid such errors it has two additional distinct editing activities against alanine. One activity is designated as 'pretransfer' editing and involves the tRNA(Pro)-independent hydrolysis of activated Ala-AMP. The other activity is designated 'posttransfer' editing and involves deacylation of mischarged Ala-tRNA(Pro). The misacylated Cys-tRNA(Pro) is not edited by ProRS. This chain is Proline--tRNA ligase, found in Nostoc punctiforme (strain ATCC 29133 / PCC 73102).